The primary structure comprises 152 residues: Dehydratase aurZ (152 aa).

Positions 34–129 (PSLSEKEYRH…APDHVNFADT (96 aa)) constitute an EthD domain.

It belongs to the tpcK family.

The catalysed reaction is naphtopyrone YWA1 = norrubrofusarin + H2O + H(+). The protein operates within pigment biosynthesis. In terms of biological role, dehydratase; part of the gene cluster that mediates the biosynthesis of aurofusarin, a red mycelium pigment which is acting as a mycotoxin. The first step is performed by the polyketide synthase which condenses one acetyl-CoA and 6 malonyl-CoA units to form the first intermediate, the cyclic heptaketide and yellow pigment YWA1. The C2 hydroxyl group in the pyrone ring of YWA1 is probably formed during ring closure by an aldol-type cyclization reaction. The dehydratase aurZ then acts as the first tailoring enzyme in the aurofusarin biosynthetic pathway by converting YWA1 to nor-rubrofusarin. Nor-rubrofusarin is then methylated to rubrofusarin by the O-methyltransferase aurJ. Rubrofusarin is then transported across the plasma membrane by the rubrofusarin-specific pump aurT for further enzymatic processing by the extracellular complex composed of GIP1, aurF, aurO and aurS to yield aurofusarin. The chain is Dehydratase aurZ from Gibberella zeae (strain ATCC MYA-4620 / CBS 123657 / FGSC 9075 / NRRL 31084 / PH-1) (Wheat head blight fungus).